We begin with the raw amino-acid sequence, 449 residues long: Probable glycine dehydrogenase (decarboxylating) subunit 1 (449 aa).

It belongs to the GcvP family. N-terminal subunit subfamily. In terms of assembly, the glycine cleavage system is composed of four proteins: P, T, L and H. In this organism, the P 'protein' is a heterodimer of two subunits.

The catalysed reaction is N(6)-[(R)-lipoyl]-L-lysyl-[glycine-cleavage complex H protein] + glycine + H(+) = N(6)-[(R)-S(8)-aminomethyldihydrolipoyl]-L-lysyl-[glycine-cleavage complex H protein] + CO2. The glycine cleavage system catalyzes the degradation of glycine. The P protein binds the alpha-amino group of glycine through its pyridoxal phosphate cofactor; CO(2) is released and the remaining methylamine moiety is then transferred to the lipoamide cofactor of the H protein. This Pyrococcus abyssi (strain GE5 / Orsay) protein is Probable glycine dehydrogenase (decarboxylating) subunit 1.